A 492-amino-acid polypeptide reads, in one-letter code: Metal cation symporter ZIP14 (492 aa).

The first 30 residues, 1-30 (MKLLLLHPAFQSCLLLTLLGLWRTTPEAHA), serve as a signal peptide directing secretion. Topologically, residues 31-157 (SSLGAPAISA…PSAVEVWGYG (127 aa)) are extracellular. N-linked (GlcNAc...) asparagine glycosylation is found at Asn-77, Asn-87, and Asn-102. The helical transmembrane segment at 158–178 (LLCVTVISLCSLLGASVVPFM) threads the bilayer. Residues 179 to 186 (KKTFYKRL) lie on the Cytoplasmic side of the membrane. The chain crosses the membrane as a helical span at residues 187–207 (LLYFIALAIGTLYSNALFQLI). Residues 208–224 (PEAFGFNPLEDYYVSKS) are Extracellular-facing. A helical membrane pass occupies residues 225–245 (AVVFGGFYLFFFTEKILKILL). At 246-397 (KQKNEHHHGH…LLNAGMSIQQ (152 aa)) the chain is on the cytoplasmic side. Positions 251-258 (HHHGHSHY) match the HHHGHXHX-motif motif. Residues 376–381 (EEFPHE) carry the XEXPHE-motif motif. A helical transmembrane segment spans residues 398 to 418 (ALFFNFLSACCCYLGLAFGIL). Topologically, residues 419–424 (AGSHFS) are extracellular. A helical membrane pass occupies residues 425–445 (ANWIFALAGGMFLYISLADMF). The Cytoplasmic segment spans residues 446–460 (PEMNEVCQEDERKGS). A helical membrane pass occupies residues 461–481 (ILIPFIIQNLGLLTGFTIMVV). At 482–492 (LTMYSGQIQIG) the chain is on the extracellular side.

This sequence belongs to the ZIP transporter (TC 2.A.5) family. Homotrimer. Post-translationally, ubiquitinated. Ubiquitination occurs upon iron depletion. The ubiquitinated form undergoes proteasomal degradation. N-glycosylated. N-glycosylation at Asn-102 is required for iron-regulated extraction of the transporter from membranes and subsequent proteasomal degradation. In terms of tissue distribution, ubiquitously expressed, with higher expression in liver, pancreas, fetal liver, thyroid gland, left and right ventricle, right atrium and fetal heart. Weakly expressed in spleen, thymus, and peripheral blood leukocytes. Expressed in liver and in brain by large neurons in the globus pallidus, the insular cortex and the dentate nucleus and to a lower extent in the putamen and the caudate nucleus (at protein level). Expressed in osteoblasts and giant osteoclast-like cells, but not in osteocytes found osteoblastoma and giant cell tumors (at protein level). Expressed by microvascular capillary endothelial cells that constitute the blood-brain barrier (at protein level). Expressed by macrophages. As to expression, widely expressed but not detected in brain, heart, skeletal muscle, placenta and fetal skin.

Its subcellular location is the cell membrane. It is found in the apical cell membrane. The protein resides in the basolateral cell membrane. The protein localises to the early endosome membrane. It localises to the late endosome membrane. Its subcellular location is the lysosome membrane. The enzyme catalyses Zn(2+)(out) + 2 hydrogencarbonate(out) = Zn(2+)(in) + 2 hydrogencarbonate(in). The catalysed reaction is Mn(2+)(out) + 2 hydrogencarbonate(out) = Mn(2+)(in) + 2 hydrogencarbonate(in). It carries out the reaction Fe(2+)(out) + 2 hydrogencarbonate(out) = Fe(2+)(in) + 2 hydrogencarbonate(in). It catalyses the reaction Cd(2+)(out) + 2 hydrogencarbonate(out) = Cd(2+)(in) + 2 hydrogencarbonate(in). In terms of biological role, electroneutral transporter of the plasma membrane mediating the cellular uptake of the divalent metal cations zinc, manganese and iron that are important for tissue homeostasis, metabolism, development and immunity. Functions as an energy-dependent symporter, transporting through the membranes an electroneutral complex composed of a divalent metal cation and two bicarbonate anions. Beside these endogenous cellular substrates, can also import cadmium a non-essential metal which is cytotoxic and carcinogenic. Controls the cellular uptake by the intestinal epithelium of systemic zinc, which is in turn required to maintain tight junctions and the intestinal permeability. Modifies the activity of zinc-dependent phosphodiesterases, thereby indirectly regulating G protein-coupled receptor signaling pathways important for gluconeogenesis and chondrocyte differentiation. Regulates insulin receptor signaling, glucose uptake, glycogen synthesis and gluconeogenesis in hepatocytes through the zinc-dependent intracellular catabolism of insulin. Through zinc cellular uptake also plays a role in the adaptation of cells to endoplasmic reticulum stress. Major manganese transporter of the basolateral membrane of intestinal epithelial cells, it plays a central role in manganese systemic homeostasis through intestinal manganese uptake. Also involved in manganese extracellular uptake by cells of the blood-brain barrier. May also play a role in manganese and zinc homeostasis participating in their elimination from the blood through the hepatobiliary excretion. Also functions in the extracellular uptake of free iron. May also function intracellularly and mediate the transport from endosomes to cytosol of iron endocytosed by transferrin. Plays a role in innate immunity by regulating the expression of cytokines by activated macrophages. In Homo sapiens (Human), this protein is Metal cation symporter ZIP14.